The sequence spans 261 residues: MIVVKTGGRVLKQNLDRVVQSIIKTNNKIIYVHGGGDQVTELSSKLGIEPKFVTSPEGIRSRYTTKEELEVFIMVMSSISRNILSRVSSYRNSIALTGADGKLVLAERKKKIIVIDERGRKRIIDGGYTGKIKNINKELLVTFSNLFEVIILSPLAYDPDESTLLNVDGDQMAFALATALRSDNLILLTDVEGVMVDNKVVNKLTVEEAKELSKKIGPGMNRKILMAAEAIENGVKKVIISSGLVEDPIKNALEGKGTVIE.

Residues 35–36 (GG), Arg62, and Asn166 contribute to the substrate site.

This sequence belongs to the acetylglutamate kinase family. LysZ subfamily.

The protein resides in the cytoplasm. It catalyses the reaction [amino-group carrier protein]-C-terminal-N-(1,4-dicarboxybutan-1-yl)-L-glutamine + ATP = [amino-group carrier protein]-C-terminal-N-(1-carboxy-5-phosphooxy-5-oxopentan-1-yl)-L-glutamine + ADP. The catalysed reaction is [amino-group carrier protein]-C-terminal-gamma-(L-glutamyl)-L-glutamate + ATP = [amino-group carrier protein]-C-terminal-gamma-(5-phospho-L-glutamyl)-L-glutamate + ADP. It functions in the pathway amino-acid biosynthesis; L-lysine biosynthesis via AAA pathway; L-lysine from L-alpha-aminoadipate (Thermus route): step 2/5. The protein operates within amino-acid biosynthesis; L-arginine biosynthesis. Involved in both the arginine and lysine biosynthetic pathways. Phosphorylates the LysW-bound precursors glutamate (for arginine biosynthesis), respectively alpha-aminoadipate (for lysine biosynthesis). The sequence is that of [LysW]-aminoadipate/[LysW]-glutamate kinase from Sulfolobus acidocaldarius (strain ATCC 33909 / DSM 639 / JCM 8929 / NBRC 15157 / NCIMB 11770).